Reading from the N-terminus, the 286-residue chain is MAHISATLVKELRERTGAGMMECKKALVDTQGDVELAIDNMRKSGQAKAAKKSGRVASEGVILLEISSEQKLGAILELNCETDFVAKDASFKSFAEEIISTALKEKITSSELLKAKFEEQRTALVAKIGENINIRRIAMLESEALGSYLHGARIGVLVSAVGADQKCLKNLAMHIAASKPEYVNSEDVPSEVVNREHQVQLDIAMQSGKPRDIAEKMVSGRMKKFTGEISLTGQNFVMEPTKTVGDWLEEHGATVLNFIRFEVGEGIEKSTTNFADEVAAISKKEV.

Residues T82–V85 are involved in Mg(2+) ion dislocation from EF-Tu.

Belongs to the EF-Ts family.

The protein localises to the cytoplasm. In terms of biological role, associates with the EF-Tu.GDP complex and induces the exchange of GDP to GTP. It remains bound to the aminoacyl-tRNA.EF-Tu.GTP complex up to the GTP hydrolysis stage on the ribosome. The sequence is that of Elongation factor Ts from Hamiltonella defensa subsp. Acyrthosiphon pisum (strain 5AT).